A 139-amino-acid chain; its full sequence is Protein cornichon homolog 4 (139 aa).

3 consecutive transmembrane segments (helical) span residues 5 to 25 (VFLFSLLDCCALIFLSVYFII), 57 to 77 (IVTVLMLVSLHWFIFLLNLPV), and 118 to 138 (LGFYLLCFFMYLYSMILALIN).

Belongs to the cornichon family. As to quaternary structure, interacts with Sec23/24 complex components SEC24B and SEC24D. Interacts with CCR5. Interacts with ADRB2 in the early secretory pathway.

It localises to the membrane. It is found in the endoplasmic reticulum. The protein localises to the endoplasmic reticulum-Golgi intermediate compartment. Functionally, involved in G protein-coupled receptors (GPCRs) trafficking from the endoplasmic reticulum to the cell surface; it promotes the exit of GPCRs from the early secretory pathway, likely through interaction with the COPII machinery. The chain is Protein cornichon homolog 4 (Cnih4) from Mus musculus (Mouse).